We begin with the raw amino-acid sequence, 596 residues long: Fructan 1-exohydrolase (596 aa).

An N-terminal signal peptide occupies residues 1–20 (MAQAWAFLLPVLVLGSYVTS). Residue Asp75 is part of the active site. Residues Asn168, Asn236, and Asn248 are each glycosylated (N-linked (GlcNAc...) asparagine). Cys446 and Cys492 are oxidised to a cystine. An N-linked (GlcNAc...) asparagine glycan is attached at Asn567.

The protein belongs to the glycosyl hydrolase 32 family.

It carries out the reaction Hydrolysis of terminal, non-reducing (2-&gt;1)-linked beta-D-fructofuranose residues in fructans.. Inhibited by sucrose. Hydrolyzes inulin-type beta-(2,1)-fructans. May play a role as a beta-(2,1)-trimmer during graminan biosynthesis. This chain is Fructan 1-exohydrolase, found in Aegilops tauschii (Tausch's goatgrass).